The chain runs to 83 residues: Large ribosomal subunit protein bL28 (83 aa).

It belongs to the bacterial ribosomal protein bL28 family.

The sequence is that of Large ribosomal subunit protein bL28 from Amoebophilus asiaticus (strain 5a2).